A 262-amino-acid polypeptide reads, in one-letter code: Transmembrane protein 106A (262 aa).

The chain crosses the membrane as a helical span at residues 95 to 115 (FVFLAVLICLVTSSFIVFFLF).

Belongs to the TMEM106 family. Expressed in renal cells (at protein level). Expressed in epithelial cells.

Its subcellular location is the cell membrane. In terms of biological role, activates macrophages and polarizes them into M1-like macrophages through the activation of the MAPK and NF-kappaB signaling pathway. Upon activation, up-regulates the expression of CD80, CD86, CD69 and MHC II on macrophages, and induces the release of pro-inflammatory cytokines such as TNF, IL1B, IL6, CCL2 and nitric oxide. May play a role in inhibition of proliferation and migration. This Homo sapiens (Human) protein is Transmembrane protein 106A (TMEM106A).